We begin with the raw amino-acid sequence, 119 residues long: Immunoglobulin heavy variable 3-72 (119 aa).

An N-terminal signal peptide occupies residues 1-19; sequence MEFGLSWVFLVVILQGVQC. A framework-1 region spans residues 20-44; sequence EVQLVESGGGLVQPGGSLRLSCAAS. An Ig-like domain is found at 20–119; that stretch reads EVQLVESGGG…EDTAVYYCAR (100 aa). The cysteines at positions 41 and 117 are disulfide-linked. Residues 45–52 are complementarity-determining-1; the sequence is GFTFSDHY. The framework-2 stretch occupies residues 53–69; sequence MDWVRQAPGKGLEWVGR. The segment at 70-79 is complementarity-determining-2; the sequence is TRNKANSYTT. The interval 80-117 is framework-3; it reads EYAASVKGRFTISRDDSKNSLYLQMNSLKTEDTAVYYC. The complementarity-determining-3 stretch occupies residues 118-119; the sequence is AR.

Immunoglobulins are composed of two identical heavy chains and two identical light chains; disulfide-linked.

It is found in the secreted. The protein localises to the cell membrane. In terms of biological role, v region of the variable domain of immunoglobulin heavy chains that participates in the antigen recognition. Immunoglobulins, also known as antibodies, are membrane-bound or secreted glycoproteins produced by B lymphocytes. In the recognition phase of humoral immunity, the membrane-bound immunoglobulins serve as receptors which, upon binding of a specific antigen, trigger the clonal expansion and differentiation of B lymphocytes into immunoglobulins-secreting plasma cells. Secreted immunoglobulins mediate the effector phase of humoral immunity, which results in the elimination of bound antigens. The antigen binding site is formed by the variable domain of one heavy chain, together with that of its associated light chain. Thus, each immunoglobulin has two antigen binding sites with remarkable affinity for a particular antigen. The variable domains are assembled by a process called V-(D)-J rearrangement and can then be subjected to somatic hypermutations which, after exposure to antigen and selection, allow affinity maturation for a particular antigen. The sequence is that of Immunoglobulin heavy variable 3-72 from Homo sapiens (Human).